Consider the following 479-residue polypeptide: Catalase A (479 aa).

His-63 is an active-site residue. Tyr-346 is a heme binding site.

Belongs to the catalase family. Heme serves as cofactor.

The protein resides in the peroxisome matrix. It catalyses the reaction 2 H2O2 = O2 + 2 H2O. In terms of biological role, catalyzes the degradation of hydrogen peroxide (H(2)O(2)) generated by peroxisomal oxidases to water and oxygen, thereby protecting cells from the toxic effects of hydrogen peroxide. The sequence is that of Catalase A (catA) from Botryotinia fuckeliana (Noble rot fungus).